A 314-amino-acid chain; its full sequence is Flotillin-like protein FloA (314 aa).

A helical membrane pass occupies residues Ile-4–Val-24.

This sequence belongs to the flotillin-like FloA family. In terms of assembly, homooligomerizes.

It is found in the cell membrane. It localises to the membrane raft. In terms of biological role, found in functional membrane microdomains (FMM) that may be equivalent to eukaryotic membrane rafts. FMMs are highly dynamic and increase in number as cells age. Flotillins are thought to be important factors in membrane fluidity. The polypeptide is Flotillin-like protein FloA (Listeria innocua serovar 6a (strain ATCC BAA-680 / CLIP 11262)).